Reading from the N-terminus, the 135-residue chain is Succinate dehydrogenase assembly factor 2, mitochondrial (135 aa).

Belongs to the SDHAF2 family. In terms of assembly, interacts with the flavoprotein subunit within the SDH catalytic dimer.

The protein resides in the mitochondrion matrix. Functionally, plays an essential role in the assembly of succinate dehydrogenase (SDH), an enzyme complex (also referred to as respiratory complex II) that is a component of both the tricarboxylic acid (TCA) cycle and the mitochondrial electron transport chain, and which couples the oxidation of succinate to fumarate with the reduction of ubiquinone (coenzyme Q) to ubiquinol. Required for flavinylation (covalent attachment of FAD) of the flavoprotein subunit of the SDH catalytic dimer. This Meyerozyma guilliermondii (strain ATCC 6260 / CBS 566 / DSM 6381 / JCM 1539 / NBRC 10279 / NRRL Y-324) (Yeast) protein is Succinate dehydrogenase assembly factor 2, mitochondrial.